The chain runs to 208 residues: Outer-membrane lipoprotein carrier protein (208 aa).

Residues 1 to 21 (MPAFRYLIVLPLLCWGFASQA) form the signal peptide.

The protein belongs to the LolA family. Monomer.

It localises to the periplasm. In terms of biological role, participates in the translocation of lipoproteins from the inner membrane to the outer membrane. Only forms a complex with a lipoprotein if the residue after the N-terminal Cys is not an aspartate (The Asp acts as a targeting signal to indicate that the lipoprotein should stay in the inner membrane). The chain is Outer-membrane lipoprotein carrier protein from Methylococcus capsulatus (strain ATCC 33009 / NCIMB 11132 / Bath).